Consider the following 156-residue polypeptide: Large ribosomal subunit protein uL22 (156 aa).

It belongs to the universal ribosomal protein uL22 family. In terms of assembly, part of the 50S ribosomal subunit.

This protein binds specifically to 23S rRNA. It makes multiple contacts with different domains of the 23S rRNA in the assembled 50S subunit and ribosome. Its function is as follows. The globular domain of the protein is located near the polypeptide exit tunnel on the outside of the subunit, while an extended beta-hairpin is found that lines the wall of the exit tunnel in the center of the 70S ribosome. This chain is Large ribosomal subunit protein uL22, found in Aeropyrum pernix (strain ATCC 700893 / DSM 11879 / JCM 9820 / NBRC 100138 / K1).